A 3165-amino-acid chain; its full sequence is ORFB polyprotein (3165 aa).

Residues 271–418 enclose the Peptidase C8 domain; it reads MARSIGLSHE…LENEPDILVG (148 aa). Residues Cys-341 and His-388 each act as for papain-like protease p48 activity in the active site. The disordered stretch occupies residues 453–472; the sequence is AEPGQRAKDNTNPSTPRPIE. A run of 6 helical transmembrane segments spans residues 791–811, 823–843, 1166–1186, 1193–1213, 1215–1235, and 1356–1376; these read IMIA…YVPY, YILL…GYAC, AGLF…AAIM, KYLV…KALW, FPIF…VSVY, and ALGF…LRPP. Positions 1793–2208 are RNA-directed RNA polymerase; that stretch reads FYKSRKALKQ…AEDSADYRAW (416 aa). The next 3 membrane-spanning stretches (helical) occupy residues 2495–2515, 2517–2537, and 2590–2610; these read VRIY…MHWV, LFIQ…WSFW, and LGIV…EVLF. Positions 2651-2796 constitute a Helicase ATP-binding domain; the sequence is ATKAIEHGHV…IPFLEPTLPK (146 aa). 2664-2671 contacts ATP; it reads AKTASGKS. Positions 2751–2754 match the DEFH box motif; the sequence is DEFH.

This sequence in the C-terminal section; belongs to the DEAD box helicase family. In terms of processing, papain-like protease p48 is autocatalytically processed. The putative RNA-directed RNA polymerase/helicase may be further processed.

Its subcellular location is the host membrane. It carries out the reaction RNA(n) + a ribonucleoside 5'-triphosphate = RNA(n+1) + diphosphate. It catalyses the reaction ATP + H2O = ADP + phosphate + H(+). Its function is as follows. Papain-like protease p48 is a cysteine protease of the peptidase family C8. This is ORFB polyprotein from Cryphonectria hypovirus 1 (strain EP713) (CHV-1/EP713).